The sequence spans 579 residues: Glycine--tRNA ligase (579 aa).

Glu175 contacts glycine. ATP is bound by residues 207–209 (RNE) and 218–219 (RV). Glu226 is a glycine binding site. Position 327–328 (327–328 (EC)) interacts with ATP. 442–444 (EPS) is a binding site for glycine. Arg449 provides a ligand contact to ATP.

This sequence belongs to the class-II aminoacyl-tRNA synthetase family. In terms of assembly, homodimer.

The enzyme catalyses tRNA(Gly) + glycine + ATP = glycyl-tRNA(Gly) + AMP + diphosphate. The catalysed reaction is 2 ATP + H(+) = P(1),P(4)-bis(5'-adenosyl) tetraphosphate + diphosphate. Its function is as follows. Catalyzes the ATP-dependent ligation of glycine to the 3'-end of its cognate tRNA, via the formation of an aminoacyl-adenylate intermediate (Gly-AMP). Also produces diadenosine tetraphosphate (Ap4A), a universal pleiotropic signaling molecule needed for cell regulation pathways, by direct condensation of 2 ATPs. Thereby, may play a special role in Ap4A homeostasis. This is Glycine--tRNA ligase from Encephalitozoon cuniculi (strain GB-M1) (Microsporidian parasite).